The chain runs to 1283 residues: Rab11 family-interacting protein 1 (1283 aa).

A C2 domain is found at Met1–Tyr126. A compositionally biased stretch (basic and acidic residues) spans Ser161–Gly185. The segment at Ser161–Thr281 is disordered. 4 positions are modified to phosphoserine: Ser184, Ser202, Ser206, and Ser234. Polar residues predominate over residues Asn225–Pro239. Positions Trp257–Ser266 are enriched in acidic residues. Residues Ser300, Ser315, Ser339, Ser341, Ser343, Ser345, Ser356, Ser357, and Ser382 each carry the phosphoserine modification. 5 disordered regions span residues Glu330 to Pro727, Val741 to Pro782, Pro835 to Met913, Asp969 to Thr993, and Ala1037 to Asn1141. A compositionally biased stretch (basic and acidic residues) spans Ala419–Arg433. Ser435 bears the Phosphoserine mark. The span at Gly442–Glu451 shows a compositional bias: basic and acidic residues. Ser477 carries the post-translational modification Phosphoserine. A compositionally biased stretch (basic and acidic residues) spans Asp482–Thr491. 2 positions are modified to phosphoserine: Ser529 and Ser545. Positions Ser588–Ile612 are enriched in low complexity. The segment covering Gln637–Leu652 has biased composition (polar residues). Basic and acidic residues predominate over residues Glu698 to Asp715. Ser758 carries the post-translational modification Phosphoserine. Residues Glu855–Ser866 are compositionally biased toward basic and acidic residues. Residues Val975–Gly986 are compositionally biased toward acidic residues. Positions Ala1037 to Glu1048 are enriched in polar residues. Positions Ser1116–Thr1131 are enriched in basic and acidic residues. The residue at position 1135 (Ser1135) is a Phosphoserine. In terms of domain architecture, FIP-RBD spans Lys1211–Pro1273. Residues Ala1219 to Met1283 are necessary for interaction with RAB4A and RAB11A, subcellular location and endosomal recycling.

As to quaternary structure, interacts with RAB11A (GTP-bound form); the interaction induces RAB11FIP1 recruitment to membranes. Interacts with RAB14 (GTP-bound form). Homooligomer. Isoform 2 interacts with RAB4A, RAB11A, RAB11B and RAB25. According to PubMed:15280022, RAB4A binding to RAB11FIP1 is of very low affinity in vitro and in vivo. Isoform 2 is expressed in brain, heart, testis, lung, spleen, ovary and small intestine.

Its subcellular location is the recycling endosome. The protein localises to the cytoplasmic vesicle. It is found in the phagosome membrane. Its function is as follows. A Rab11 effector protein involved in the endosomal recycling process. Also involved in controlling membrane trafficking along the phagocytic pathway and in phagocytosis. Interaction with RAB14 may function in the process of neurite formation. The chain is Rab11 family-interacting protein 1 from Homo sapiens (Human).